A 157-amino-acid polypeptide reads, in one-letter code: MIAIYPGSFDPITLGHLDIIERGGQLFDLVIVTVLRNPNKQPLFSVEKRVEQIRECTQHLSNVEVDSFTGLTVEYAKLRNAKVLLRGLRVLSDFEKELQMAHTNVTLWDGIETVFLATAKEYSFLSSSIVKEIAKFGGSISHLVPKNVAQDITLYYS.

Position 8 (Ser8) interacts with substrate. Residues 8–9 and His16 each bind ATP; that span reads SF. Residues Lys40, Thr72, and Arg86 each contribute to the substrate site. Residues 87–89, Glu97, and 122–128 contribute to the ATP site; these read GLR and YSFLSSS.

The protein belongs to the bacterial CoaD family. In terms of assembly, homohexamer. Mg(2+) is required as a cofactor.

The protein resides in the cytoplasm. It catalyses the reaction (R)-4'-phosphopantetheine + ATP + H(+) = 3'-dephospho-CoA + diphosphate. It functions in the pathway cofactor biosynthesis; coenzyme A biosynthesis; CoA from (R)-pantothenate: step 4/5. In terms of biological role, reversibly transfers an adenylyl group from ATP to 4'-phosphopantetheine, yielding dephospho-CoA (dPCoA) and pyrophosphate. The protein is Phosphopantetheine adenylyltransferase of Gloeothece citriformis (strain PCC 7424) (Cyanothece sp. (strain PCC 7424)).